The sequence spans 335 residues: Homeobox protein DBX1 (335 aa).

2 disordered regions span residues 58-102 and 240-335; these read IPAA…LSPA and KERE…ITVS. Low complexity predominate over residues 83-95; it reads GSPGSGSRRGSSP. Positions 181–240 form a DNA-binding region, homeobox; sequence GMLRRAVFSDVQRKALEKTFQKQKYISKPDRKKLASKLGLKDSQVKIWFQNRRMKWRNSK. The span at 299–317 shows a compositional bias: low complexity; that stretch reads GPLPASPAHSSSPGKPSDF. Residues 318–335 are compositionally biased toward acidic residues; sequence SDSDEDEEGEEDEEITVS.

The protein belongs to the H2.0 homeobox family.

Its subcellular location is the nucleus. Could have a role in patterning the central nervous system during embryogenesis. Has a key role in regulating the distinct phenotypic features that distinguish two major classes of ventral interneurons, V0 and V1 neurons. Regulates the transcription factor profile, neurotransmitter phenotype, intraspinal migratory path and axonal trajectory of V0 neurons, features that differentiate them from an adjacent set of V1 neurons. This Mus musculus (Mouse) protein is Homeobox protein DBX1 (Dbx1).